Reading from the N-terminus, the 255-residue chain is Large ribosomal subunit protein uL4 (255 aa).

It belongs to the universal ribosomal protein uL4 family. Part of the 50S ribosomal subunit.

Functionally, one of the primary rRNA binding proteins, this protein initially binds near the 5'-end of the 23S rRNA. It is important during the early stages of 50S assembly. It makes multiple contacts with different domains of the 23S rRNA in the assembled 50S subunit and ribosome. Forms part of the polypeptide exit tunnel. This chain is Large ribosomal subunit protein uL4, found in Thermococcus gammatolerans (strain DSM 15229 / JCM 11827 / EJ3).